The sequence spans 2040 residues: Apolipoprotein(a) (2040 aa).

The first 19 residues, 1-19 (MEHKEVVLLLLLFLKSAAP), serve as a signal peptide directing secretion. 10 Kringle domains span residues 27–105 (DCYH…LTQC), 141–219 (ECYH…LTQC), 255–333 (ECYH…LTQC), 369–447 (ECYH…LTQC), 483–561 (ECYH…LTQC), 597–675 (ECYH…LTQC), 711–789 (ECYH…LTQC), 825–903 (ECYH…LTQC), 939–1017 (ECYH…LTRC), and 1053–1131 (DCYY…LTQC). 30 disulfides stabilise this stretch: Cys28-Cys105, Cys49-Cys88, Cys77-Cys100, Cys142-Cys219, Cys163-Cys202, Cys191-Cys214, Cys256-Cys333, Cys277-Cys316, Cys305-Cys328, Cys370-Cys447, Cys391-Cys430, Cys419-Cys442, Cys484-Cys561, Cys505-Cys544, Cys533-Cys556, Cys598-Cys675, Cys619-Cys658, Cys647-Cys670, Cys712-Cys789, Cys733-Cys772, Cys761-Cys784, Cys826-Cys903, Cys847-Cys886, Cys875-Cys898, Cys940-Cys1017, Cys961-Cys1000, Cys989-Cys1012, Cys1054-Cys1131, Cys1075-Cys1114, and Cys1103-Cys1126. Asn61 carries N-linked (GlcNAc...) asparagine glycosylation. A glycan (N-linked (GlcNAc...) asparagine) is linked at Asn101. An N-linked (GlcNAc...) asparagine glycan is attached at Asn215. Asn329 carries N-linked (GlcNAc...) asparagine glycosylation. The N-linked (GlcNAc...) asparagine glycan is linked to Asn443. An N-linked (GlcNAc...) asparagine glycan is attached at Asn557. N-linked (GlcNAc...) asparagine glycosylation is present at Asn671. An N-linked (GlcNAc...) asparagine glycan is attached at Asn785. An N-linked (GlcNAc...) asparagine glycan is attached at Asn899. A glycan (N-linked (GlcNAc...) asparagine) is linked at Asn1013. Asn1127 carries N-linked (GlcNAc...) asparagine glycosylation. A disordered region spans residues 1147–1166 (DPSTEASSEEAPTEQSPGVQ). Kringle domains follow at residues 1167–1245 (DCYH…LTQC) and 1273–1351 (DCYH…LTQC). 6 cysteine pairs are disulfide-bonded: Cys1168–Cys1245, Cys1189–Cys1228, Cys1217–Cys1240, Cys1274–Cys1351, Cys1295–Cys1334, and Cys1323–Cys1346. A glycan (N-linked (GlcNAc...) asparagine) is linked at Asn1241. Asn1347 and Asn1381 each carry an N-linked (GlcNAc...) asparagine glycan. The disordered stretch occupies residues 1365–1388 (VPVPSTELPSEEAPTENSTGVQDC). Residues 1387–1465 (DCYRGDGQSY…RWEYCNLTRC (79 aa)) form the Kringle 13 domain. 3 disulfide bridges follow: Cys1388/Cys1465, Cys1409/Cys1448, and Cys1437/Cys1460. A glycan (N-linked (GlcNAc...) asparagine) is linked at Asn1461. The interval 1476–1497 (PTVAPVPSTEAPSEQAPPEKSP) is disordered. Kringle domains are found at residues 1501–1579 (DCYH…LTQC), 1615–1693 (QCYH…LTRC), and 1719–1799 (DCMF…IPLC). Intrachain disulfides connect Cys1502–Cys1579, Cys1523–Cys1562, Cys1551–Cys1574, Cys1616–Cys1693, Cys1637–Cys1676, Cys1665–Cys1688, Cys1720–Cys1799, Cys1741–Cys1782, Cys1770–Cys1794, and Cys1846–Cys1862. Asn1575 is a glycosylation site (N-linked (GlcNAc...) asparagine). A glycan (N-linked (GlcNAc...) asparagine) is linked at Asn1689. Positions 1820 to 2038 (IVGGCVAHPH…FVTWIEGMMR (219 aa)) constitute a Peptidase S1 domain. Residues His1861 and Asp1904 each act as charge relay system in the active site. Disulfide bonds link Cys1938/Cys1996, Cys1968/Cys1975, and Cys1986/Cys2014. Ser1990 acts as the Charge relay system in catalysis.

Belongs to the peptidase S1 family. Plasminogen subfamily. Disulfide-linked to apo-B100. Binds to fibronectin and decorin. N- and O-glycosylated. The N-glycans are complex biantennary structures present in either a mono- or disialylated state. The O-glycans are mostly (80%) represented by the monosialylated core type I structure, NeuNAcalpha2-3Galbeta1-3GalNAc, with smaller amounts of disialylated and non-sialylated O-glycans also detected.

Functionally, apo(a) is the main constituent of lipoprotein(a) (Lp(a)). It has serine proteinase activity and is able of autoproteolysis. Inhibits tissue-type plasminogen activator 1. Lp(a) may be a ligand for megalin/Gp 330. The chain is Apolipoprotein(a) (LPA) from Homo sapiens (Human).